The chain runs to 290 residues: Shikimate dehydrogenase (NADP(+)) (290 aa).

Shikimate contacts are provided by residues 19–21 (SLS) and Ser-65. Lys-69 serves as the catalytic Proton acceptor. The shikimate site is built by Asn-90 and Asp-105. Residues 129–133 (GAGGA) and Leu-231 each bind NADP(+). Residue Tyr-233 participates in shikimate binding. Gly-254 is an NADP(+) binding site.

It belongs to the shikimate dehydrogenase family. In terms of assembly, homodimer.

The enzyme catalyses shikimate + NADP(+) = 3-dehydroshikimate + NADPH + H(+). The protein operates within metabolic intermediate biosynthesis; chorismate biosynthesis; chorismate from D-erythrose 4-phosphate and phosphoenolpyruvate: step 4/7. Functionally, involved in the biosynthesis of the chorismate, which leads to the biosynthesis of aromatic amino acids. Catalyzes the reversible NADPH linked reduction of 3-dehydroshikimate (DHSA) to yield shikimate (SA). This is Shikimate dehydrogenase (NADP(+)) from Latilactobacillus sakei subsp. sakei (strain 23K) (Lactobacillus sakei subsp. sakei).